A 275-amino-acid polypeptide reads, in one-letter code: NH(3)-dependent NAD(+) synthetase (275 aa).

46 to 53 (GISGGQDS) contacts ATP. Residue D52 participates in Mg(2+) binding. R140 serves as a coordination point for deamido-NAD(+). Position 160 (T160) interacts with ATP. E165 contributes to the Mg(2+) binding site. The deamido-NAD(+) site is built by K173 and D180. Positions 189 and 211 each coordinate ATP. Deamido-NAD(+) is bound at residue 260–261 (HK).

This sequence belongs to the NAD synthetase family. Homodimer.

It carries out the reaction deamido-NAD(+) + NH4(+) + ATP = AMP + diphosphate + NAD(+) + H(+). Its pathway is cofactor biosynthesis; NAD(+) biosynthesis; NAD(+) from deamido-NAD(+) (ammonia route): step 1/1. Functionally, catalyzes the ATP-dependent amidation of deamido-NAD to form NAD. Uses ammonia as a nitrogen source. This chain is NH(3)-dependent NAD(+) synthetase, found in Salmonella dublin (strain CT_02021853).